The sequence spans 215 residues: ATP-dependent Clp protease proteolytic subunit 1 (215 aa).

Ser111 functions as the Nucleophile in the catalytic mechanism. His136 is an active-site residue.

Belongs to the peptidase S14 family. As to quaternary structure, fourteen ClpP subunits assemble into 2 heptameric rings which stack back to back to give a disk-like structure with a central cavity, resembling the structure of eukaryotic proteasomes.

It is found in the cytoplasm. The catalysed reaction is Hydrolysis of proteins to small peptides in the presence of ATP and magnesium. alpha-casein is the usual test substrate. In the absence of ATP, only oligopeptides shorter than five residues are hydrolyzed (such as succinyl-Leu-Tyr-|-NHMec, and Leu-Tyr-Leu-|-Tyr-Trp, in which cleavage of the -Tyr-|-Leu- and -Tyr-|-Trp bonds also occurs).. Functionally, cleaves peptides in various proteins in a process that requires ATP hydrolysis. Has a chymotrypsin-like activity. Plays a major role in the degradation of misfolded proteins. This chain is ATP-dependent Clp protease proteolytic subunit 1, found in Gluconobacter oxydans (strain 621H) (Gluconobacter suboxydans).